Consider the following 146-residue polypeptide: Large ribosomal subunit protein uL13 (146 aa).

The protein belongs to the universal ribosomal protein uL13 family. As to quaternary structure, part of the 50S ribosomal subunit.

Functionally, this protein is one of the early assembly proteins of the 50S ribosomal subunit, although it is not seen to bind rRNA by itself. It is important during the early stages of 50S assembly. This is Large ribosomal subunit protein uL13 from Mycoplasma pneumoniae (strain ATCC 29342 / M129 / Subtype 1) (Mycoplasmoides pneumoniae).